A 169-amino-acid polypeptide reads, in one-letter code: Eukaryotic translation initiation factor 5A-2 (169 aa).

At lysine 64 the chain carries Hypusine.

It belongs to the eIF-5A family. In terms of processing, lys-51 undergoes hypusination, a unique post-translational modification that consists in the addition of a butylamino group from spermidine to lysine side chain, leading to the formation of the unusual amino acid hypusine. eIF-5As are the only known proteins to undergo this modification, which is essential for their function.

The protein resides in the cytoplasm. It localises to the nucleus. Translation factor that promotes translation elongation and termination, particularly upon ribosome stalling at specific amino acid sequence contexts. Binds between the exit (E) and peptidyl (P) site of the ribosome and promotes rescue of stalled ribosome: specifically required for efficient translation of polyproline-containing peptides as well as other motifs that stall the ribosome. Acts as a ribosome quality control (RQC) cofactor by joining the RQC complex to facilitate peptidyl transfer during CAT tailing step. The sequence is that of Eukaryotic translation initiation factor 5A-2 (tif51b) from Schizosaccharomyces pombe (strain 972 / ATCC 24843) (Fission yeast).